A 476-amino-acid polypeptide reads, in one-letter code: Siroheme synthase (476 aa).

Residues 1–204 (MDYFPVFLNI…GKDQAAQDYL (204 aa)) form a precorrin-2 dehydrogenase /sirohydrochlorin ferrochelatase region. NAD(+) is bound by residues 22–23 (SV) and 43–44 (PT). S129 carries the phosphoserine modification. The interval 218-476 (GEVYLVGAGP…GNTPGYSKHP (259 aa)) is uroporphyrinogen-III C-methyltransferase. An S-adenosyl-L-methionine-binding site is contributed by P227. The active-site Proton acceptor is D250. K272 acts as the Proton donor in catalysis. S-adenosyl-L-methionine is bound by residues 303–305 (GGD), I308, 333–334 (TA), M385, and G414.

This sequence in the N-terminal section; belongs to the precorrin-2 dehydrogenase / sirohydrochlorin ferrochelatase family. In the C-terminal section; belongs to the precorrin methyltransferase family.

It catalyses the reaction uroporphyrinogen III + 2 S-adenosyl-L-methionine = precorrin-2 + 2 S-adenosyl-L-homocysteine + H(+). The enzyme catalyses precorrin-2 + NAD(+) = sirohydrochlorin + NADH + 2 H(+). The catalysed reaction is siroheme + 2 H(+) = sirohydrochlorin + Fe(2+). The protein operates within cofactor biosynthesis; adenosylcobalamin biosynthesis; precorrin-2 from uroporphyrinogen III: step 1/1. Its pathway is cofactor biosynthesis; adenosylcobalamin biosynthesis; sirohydrochlorin from precorrin-2: step 1/1. It functions in the pathway porphyrin-containing compound metabolism; siroheme biosynthesis; precorrin-2 from uroporphyrinogen III: step 1/1. It participates in porphyrin-containing compound metabolism; siroheme biosynthesis; siroheme from sirohydrochlorin: step 1/1. The protein operates within porphyrin-containing compound metabolism; siroheme biosynthesis; sirohydrochlorin from precorrin-2: step 1/1. Functionally, multifunctional enzyme that catalyzes the SAM-dependent methylations of uroporphyrinogen III at position C-2 and C-7 to form precorrin-2 via precorrin-1. Then it catalyzes the NAD-dependent ring dehydrogenation of precorrin-2 to yield sirohydrochlorin. Finally, it catalyzes the ferrochelation of sirohydrochlorin to yield siroheme. The chain is Siroheme synthase from Nitrosomonas eutropha (strain DSM 101675 / C91 / Nm57).